A 238-amino-acid chain; its full sequence is MTPHINAKKDDIAKVVLMPGDPLRAKWIAEQFMEKPRLVNEVRGMLAFTGQYKGKTITIMGHGMGIPSIGIYSYELMKFYEVNTIIRIGSCGALQGSLNLQDLIIAAKAWSESIYANDMGVEVPADKILMASPQLVELAKKTANQLQLAFHEGLVFCEDAFHQIRKDVLKLAQEKHALAVEMEAHALYANAMLLNKQALTMLTVSDSLVTHAALPAEQRQATFKNMAILSLEMASQLV.

An a purine D-ribonucleoside-binding site is contributed by His4. Phosphate is bound by residues Gly20, Arg24, Arg43, and 87 to 90 (RIGS). A purine D-ribonucleoside is bound by residues 181 to 183 (EME) and 205 to 206 (SD). Asp206 serves as the catalytic Proton donor.

This sequence belongs to the PNP/UDP phosphorylase family. In terms of assembly, homohexamer; trimer of homodimers.

It catalyses the reaction a purine D-ribonucleoside + phosphate = a purine nucleobase + alpha-D-ribose 1-phosphate. It carries out the reaction a purine 2'-deoxy-D-ribonucleoside + phosphate = a purine nucleobase + 2-deoxy-alpha-D-ribose 1-phosphate. Catalyzes the reversible phosphorolytic breakdown of the N-glycosidic bond in the beta-(deoxy)ribonucleoside molecules, with the formation of the corresponding free purine bases and pentose-1-phosphate. This chain is Purine nucleoside phosphorylase DeoD-type, found in Mycoplasma pneumoniae (strain ATCC 29342 / M129 / Subtype 1) (Mycoplasmoides pneumoniae).